Reading from the N-terminus, the 639-residue chain is PTS-dependent dihydroxyacetone kinase operon regulatory protein (639 aa).

Positions 1-318 (MSGAFNNDGR…MRQLMTSQLG (318 aa)) are sensor domain. In terms of domain architecture, GAF spans 52-189 (AMLTLGQAAL…AIAREVGNLL (138 aa)). One can recognise a PAS domain in the interval 203–265 (NQLNALLESM…AVLQQAIKQA (63 aa)). The Sigma-54 factor interaction domain maps to 327–552 (MPQDDPQTRR…LYSVIENLAL (226 aa)). Residues 355–362 (GEEGVGKA) and 415–424 (AHGGTLFLEK) each bind ATP.

In terms of assembly, homodimer. DhaR forms complexes with DhaK and DhaL-ADP.

Functionally, positively regulates the dhaKLM operon from a sigma-70 promoter. Represses its own expression. This is PTS-dependent dihydroxyacetone kinase operon regulatory protein from Escherichia coli (strain K12).